The primary structure comprises 365 residues: Peptide chain release factor 2 (365 aa).

N5-methylglutamine is present on glutamine 252.

This sequence belongs to the prokaryotic/mitochondrial release factor family. In terms of processing, methylated by PrmC. Methylation increases the termination efficiency of RF2.

The protein localises to the cytoplasm. In terms of biological role, peptide chain release factor 2 directs the termination of translation in response to the peptide chain termination codons UGA and UAA. This is Peptide chain release factor 2 from Acidithiobacillus ferrooxidans (strain ATCC 23270 / DSM 14882 / CIP 104768 / NCIMB 8455) (Ferrobacillus ferrooxidans (strain ATCC 23270)).